A 202-amino-acid polypeptide reads, in one-letter code: MKLTARQSQVLDIIRRYVDETGYPPTRAEIAAELGFRSANAAEEHLRALARKGAIEMVPGASRGIRLPEAEEDLGLPVIGQVAAGSPILAQEHIEDHCTLQPGFFSPSADYLLRVRGMSMKDIGILDGDLLAVHSTQDVHNGQIVVARVGEEVTVKRFRREGNKVWLIAENEEFAPIEVDLAEQELFIEGLGVGVIRRSDLH.

The H-T-H motif DNA-binding region spans 27-47 (RAEIAAELGFRSANAAEEHLR). Catalysis depends on for autocatalytic cleavage activity residues serine 119 and lysine 156.

It belongs to the peptidase S24 family. As to quaternary structure, homodimer.

It catalyses the reaction Hydrolysis of Ala-|-Gly bond in repressor LexA.. Represses a number of genes involved in the response to DNA damage (SOS response), including recA and lexA. In the presence of single-stranded DNA, RecA interacts with LexA causing an autocatalytic cleavage which disrupts the DNA-binding part of LexA, leading to derepression of the SOS regulon and eventually DNA repair. The chain is LexA repressor from Marinobacter nauticus (strain ATCC 700491 / DSM 11845 / VT8) (Marinobacter aquaeolei).